Here is a 561-residue protein sequence, read N- to C-terminus: MCGIWALFGSDDCLSVQCLSAMKIAHRGPDAFRFENVNGYTNCCFGFHRLAVVDPLFGMQPIRVKKYPYLWLCYNGEIYNHKALQQRFEFEYQTNVDGEIILHLYDKGGIEQTICMLDGVFAFILLDTANKKVFLGRDTYGVRPLFKAMTEDGFLAVCSEAKGLVSLKHSTTPFLKVEPFLPGHYEVLDLKPNGKVASVEMVKYHHCRDEPLHALYDSVEKLFPGFELETVKSNLRILFDNAVRKRLMTDRRIVCLLSGGLDSSLVASSLLKQLKEAQVQYPLQTFAIGMEDSPDLLAARKVANYIGSEHHEVLFNSEEGIQALDEVIFSLETYDITTVRASVGMYLISKYIRKNTDSVVIFSGEGSDELTQGYIYFHKAPSPEKAEEESERLLKELYLFDVLRADRTTAAHGLELRVPFLDHRFSSYYLSLPPEMRVPKNGIEKHLLRETFEDSNLLPKEILWRPKEAFSDGITSVKNSWFKILQDYVEHQVDDAMMATAAQKFPFNTPKTKEGYFYRQIFEHHYPGRADWLTHYWMPKWINATDPSARTLTHYKSAAKA.

Cysteine 2 serves as the catalytic For GATase activity. One can recognise a Glutamine amidotransferase type-2 domain in the interval 2–191 (CGIWALFGSD…PGHYEVLDLK (190 aa)). L-glutamine contacts are provided by residues 49–53 (RLAVV), 75–77 (NGE), and aspartate 97. The Asparagine synthetase domain maps to 213-536 (HALYDSVEKL…PGRADWLTHY (324 aa)). Residues leucine 256, isoleucine 288, and 363–364 (SG) contribute to the ATP site. An N6-acetyllysine modification is found at lysine 385. Residue threonine 545 is modified to Phosphothreonine. Phosphoserine is present on serine 557.

It catalyses the reaction L-aspartate + L-glutamine + ATP + H2O = L-asparagine + L-glutamate + AMP + diphosphate + H(+). Its pathway is amino-acid biosynthesis; L-asparagine biosynthesis; L-asparagine from L-aspartate (L-Gln route): step 1/1. The protein is Asparagine synthetase [glutamine-hydrolyzing] (ASNS) of Mesocricetus auratus (Golden hamster).